The following is a 121-amino-acid chain: Small ribosomal subunit protein uS13 (121 aa).

Positions 97–121 (VRGQRTRTNARTRRGARKTVAGKKK) are disordered. Over residues 100-121 (QRTRTNARTRRGARKTVAGKKK) the composition is skewed to basic residues.

This sequence belongs to the universal ribosomal protein uS13 family. As to quaternary structure, part of the 30S ribosomal subunit. Forms a loose heterodimer with protein S19. Forms two bridges to the 50S subunit in the 70S ribosome.

Functionally, located at the top of the head of the 30S subunit, it contacts several helices of the 16S rRNA. In the 70S ribosome it contacts the 23S rRNA (bridge B1a) and protein L5 of the 50S subunit (bridge B1b), connecting the 2 subunits; these bridges are implicated in subunit movement. Contacts the tRNAs in the A and P-sites. This Synechococcus sp. (strain CC9605) protein is Small ribosomal subunit protein uS13.